Consider the following 208-residue polypeptide: uncharacterized protein (208 aa).

Disordered stretches follow at residues 1-78 (MDLF…SPTE) and 154-208 (RRRS…PRNY). A compositionally biased stretch (basic residues) spans 40-51 (KNHKKAQPRRTT). A compositionally biased stretch (polar residues) spans 179–197 (ANSSSPNPTATGSETSYGS).

This is an uncharacterized protein from Caenorhabditis elegans.